We begin with the raw amino-acid sequence, 2230 residues long: DNA polymerase epsilon catalytic subunit A (2230 aa).

The span at 1-19 (MPTRQPSKYGNKFRSSSAS) shows a compositional bias: polar residues. The segment at 1 to 24 (MPTRQPSKYGNKFRSSSASFKPKR) is disordered. The Zn(2+) site is built by C2101, C2104, C2136, and C2139. Residues 2101 to 2139 (CNACCLIRDLDLCRDEDVLPEMGSDPNKAAPKPWRCPFC) form a CysA-type zinc finger. Residues C2170, C2173, C2185, and C2187 each contribute to the [4Fe-4S] cluster site. Positions 2170–2187 (CSKCGGLKISDFMEHCSC) match the CysB motif motif.

Belongs to the DNA polymerase type-B family. In terms of assembly, heterotetramer. Consists of 4 subunits: pol2, dpb2, dpb3 and dpb4. The cofactor is [4Fe-4S] cluster.

Its subcellular location is the nucleus. It carries out the reaction DNA(n) + a 2'-deoxyribonucleoside 5'-triphosphate = DNA(n+1) + diphosphate. In terms of biological role, DNA polymerase II participates in chromosomal DNA replication. This chain is DNA polymerase epsilon catalytic subunit A (pol2), found in Aspergillus fumigatus (strain ATCC MYA-4609 / CBS 101355 / FGSC A1100 / Af293) (Neosartorya fumigata).